The primary structure comprises 183 residues: Putative 3-methyladenine DNA glycosylase (183 aa).

Belongs to the DNA glycosylase MPG family.

The sequence is that of Putative 3-methyladenine DNA glycosylase from Wolbachia pipientis subsp. Culex pipiens (strain wPip).